A 297-amino-acid polypeptide reads, in one-letter code: MKHFLEISQLSSEQIESLLQRALYFKHTKQYPSYSQSIIANLFYENSTRTRISFELAERHLAMSVVNLDLQTSSEIKGEAIEDTIRTLAAMGIQYFVIRHKQDGLQQNLANKLGDTVHIINAGDGTHAHPSQAILDMVTIIEQKKRLDKLKIAILGNIKHSRVANSFQCICSKLGVGDLVLISPEIWQPSQVHFGRVTDNLNEGLEGADVVICLRVQRERLLEDDHLDLDFYRNNFALTQKSLSYAKPDAMVMHPGPMNRGVEIDSEVADGNQSCILQQVTNGVYARMAILESLIAS.

Residues Arg49 and Thr50 each contribute to the carbamoyl phosphate site. Lys77 lines the L-aspartate pocket. Positions 99, 129, and 132 each coordinate carbamoyl phosphate. Positions 162 and 215 each coordinate L-aspartate. Gly256 and Pro257 together coordinate carbamoyl phosphate.

It belongs to the aspartate/ornithine carbamoyltransferase superfamily. ATCase family. As to quaternary structure, heterododecamer (2C3:3R2) of six catalytic PyrB chains organized as two trimers (C3), and six regulatory PyrI chains organized as three dimers (R2).

It carries out the reaction carbamoyl phosphate + L-aspartate = N-carbamoyl-L-aspartate + phosphate + H(+). Its pathway is pyrimidine metabolism; UMP biosynthesis via de novo pathway; (S)-dihydroorotate from bicarbonate: step 2/3. Catalyzes the condensation of carbamoyl phosphate and aspartate to form carbamoyl aspartate and inorganic phosphate, the committed step in the de novo pyrimidine nucleotide biosynthesis pathway. In Legionella pneumophila (strain Paris), this protein is Aspartate carbamoyltransferase catalytic subunit.